Here is a 456-residue protein sequence, read N- to C-terminus: UPF0210 protein Dde_3704 (456 aa).

This sequence belongs to the UPF0210 family. Homodimer.

The protein is UPF0210 protein Dde_3704 of Oleidesulfovibrio alaskensis (strain ATCC BAA-1058 / DSM 17464 / G20) (Desulfovibrio alaskensis).